Here is a 105-residue protein sequence, read N- to C-terminus: Large ribosomal subunit protein bL21 (105 aa).

Belongs to the bacterial ribosomal protein bL21 family. Part of the 50S ribosomal subunit. Contacts protein L20.

This protein binds to 23S rRNA in the presence of protein L20. The protein is Large ribosomal subunit protein bL21 of Treponema pallidum (strain Nichols).